We begin with the raw amino-acid sequence, 1489 residues long: WD repeat-containing protein 7 (1489 aa).

WD repeat units lie at residues 17–56 (APTH…EVNP), 62–104 (GHTA…CIEF), 156–199 (ISPD…SGMQ), 324–366 (VICP…EKQE), 404–443 (NEPL…IVQL), 462–507 (GHRN…MKHI), and 558–597 (RHLF…LDRC). Disordered stretches follow at residues 754 to 783 (IKEH…YRAS) and 911 to 947 (GDHM…QGQI). Basic and acidic residues predominate over residues 767–782 (EARRQSREDSDPEYRA). Phosphoserine is present on Ser-935. 2 WD repeats span residues 1350–1389 (PAIC…CQTI) and 1391–1431 (GHKG…LGSI). Position 1455 is a phosphoserine (Ser-1455).

This chain is WD repeat-containing protein 7 (Wdr7), found in Mus musculus (Mouse).